The primary structure comprises 129 residues: ATP synthase epsilon chain (129 aa).

Belongs to the ATPase epsilon chain family. In terms of assembly, F-type ATPases have 2 components, CF(1) - the catalytic core - and CF(0) - the membrane proton channel. CF(1) has five subunits: alpha(3), beta(3), gamma(1), delta(1), epsilon(1). CF(0) has three main subunits: a, b and c.

It is found in the cell inner membrane. Its function is as follows. Produces ATP from ADP in the presence of a proton gradient across the membrane. This chain is ATP synthase epsilon chain, found in Campylobacter fetus subsp. fetus (strain 82-40).